We begin with the raw amino-acid sequence, 172 residues long: Molybdopterin synthase catalytic subunit (172 aa).

S20 is modified (phosphoserine). Substrate contacts are provided by residues 127–128, K143, and 150–152; these read HR and KKE.

The protein belongs to the MoaE family. MOCS2B subfamily. Heterotetramer; composed of 2 small (MOCS2A) and 2 large (MOCS2B) subunits.

It localises to the cytoplasm. The protein localises to the cytosol. It catalyses the reaction 2 [molybdopterin-synthase sulfur-carrier protein]-C-terminal-Gly-aminoethanethioate + cyclic pyranopterin phosphate + H2O = molybdopterin + 2 [molybdopterin-synthase sulfur-carrier protein]-C-terminal Gly-Gly + 2 H(+). It participates in cofactor biosynthesis; molybdopterin biosynthesis. Its function is as follows. Catalytic subunit of the molybdopterin synthase complex, a complex that catalyzes the conversion of precursor Z into molybdopterin. Acts by mediating the incorporation of 2 sulfur atoms from thiocarboxylated MOCS2A into precursor Z to generate a dithiolene group. The polypeptide is Molybdopterin synthase catalytic subunit (Pongo abelii (Sumatran orangutan)).